A 356-amino-acid polypeptide reads, in one-letter code: NADH-quinone oxidoreductase subunit H (356 aa).

9 helical membrane-spanning segments follow: residues 16–36 (IAVL…AFLL), 52–72 (PNVV…KFVF), 85–105 (LYLL…AVVP), 117–137 (VGIL…IIGG), 163–183 (IGFI…SEII), 201–221 (WPMP…ISAL), 254–274 (FMVG…ILFF), 295–315 (AWYF…FAMV), and 334–354 (IFLP…VYGP).

This sequence belongs to the complex I subunit 1 family. NDH-1 is composed of 14 different subunits. Subunits NuoA, H, J, K, L, M, N constitute the membrane sector of the complex.

The protein resides in the cell inner membrane. The enzyme catalyses a quinone + NADH + 5 H(+)(in) = a quinol + NAD(+) + 4 H(+)(out). NDH-1 shuttles electrons from NADH, via FMN and iron-sulfur (Fe-S) centers, to quinones in the respiratory chain. The immediate electron acceptor for the enzyme in this species is believed to be ubiquinone. Couples the redox reaction to proton translocation (for every two electrons transferred, four hydrogen ions are translocated across the cytoplasmic membrane), and thus conserves the redox energy in a proton gradient. This subunit may bind ubiquinone. In Maricaulis maris (strain MCS10) (Caulobacter maris), this protein is NADH-quinone oxidoreductase subunit H.